A 343-amino-acid chain; its full sequence is Aspartate-semialdehyde dehydrogenase (343 aa).

NADP(+) contacts are provided by residues Ser20 to Val23 and Arg48 to Ser49. Arg108 is a phosphate binding site. Residue Cys137 is the Acyl-thioester intermediate of the active site. Residue Gln164 coordinates substrate. Ser167–Gly168 contacts NADP(+). Lys221 serves as a coordination point for phosphate. Arg243 serves as a coordination point for substrate. The Proton acceptor role is filled by His250. Position 323 (Gln323) interacts with NADP(+).

Belongs to the aspartate-semialdehyde dehydrogenase family. As to quaternary structure, homodimer.

It carries out the reaction L-aspartate 4-semialdehyde + phosphate + NADP(+) = 4-phospho-L-aspartate + NADPH + H(+). Its pathway is amino-acid biosynthesis; L-lysine biosynthesis via DAP pathway; (S)-tetrahydrodipicolinate from L-aspartate: step 2/4. It participates in amino-acid biosynthesis; L-methionine biosynthesis via de novo pathway; L-homoserine from L-aspartate: step 2/3. The protein operates within amino-acid biosynthesis; L-threonine biosynthesis; L-threonine from L-aspartate: step 2/5. Catalyzes the NADPH-dependent formation of L-aspartate-semialdehyde (L-ASA) by the reductive dephosphorylation of L-aspartyl-4-phosphate. This Prochlorococcus marinus (strain SARG / CCMP1375 / SS120) protein is Aspartate-semialdehyde dehydrogenase.